We begin with the raw amino-acid sequence, 406 residues long: Serine/threonine transporter SstT (406 aa).

9 consecutive transmembrane segments (helical) span residues 11 to 31, 45 to 65, 79 to 99, 141 to 161, 185 to 205, 216 to 236, 298 to 318, 330 to 350, and 357 to 377; these read IGLVPLIIVGLVLGILIGWLM, FVGALKAVAPILVFILVMAAI, VLIMYIFGTFLAALTAVVASF, AIANANYMGILAWALIIGLAL, FVIAFAPIGILGLVANTIAET, LLTILVGCMLFIALVVNPIIV, MAGAAITINVLTLAAAHTLGV, VVATVAACGASGVAGGSLLLI, and FNIPNDIAMQVVAIGFIIGVV.

The protein belongs to the dicarboxylate/amino acid:cation symporter (DAACS) (TC 2.A.23) family.

The protein localises to the cell inner membrane. It carries out the reaction L-serine(in) + Na(+)(in) = L-serine(out) + Na(+)(out). The enzyme catalyses L-threonine(in) + Na(+)(in) = L-threonine(out) + Na(+)(out). Functionally, involved in the import of serine and threonine into the cell, with the concomitant import of sodium (symport system). In Psychrobacter sp. (strain PRwf-1), this protein is Serine/threonine transporter SstT.